The primary structure comprises 302 residues: Acetyl-coenzyme A carboxylase carboxyl transferase subunit beta (302 aa).

The 270-residue stretch at 25–294 (VWTKCDSCGQ…PQEDIVTEAA (270 aa)) folds into the CoA carboxyltransferase N-terminal domain. Zn(2+) contacts are provided by Cys29, Cys32, Cys48, and Cys51. Residues 29-51 (CDSCGQVLYRAELERNLEVCPKC) form a C4-type zinc finger.

The protein belongs to the AccD/PCCB family. Acetyl-CoA carboxylase is a heterohexamer composed of biotin carboxyl carrier protein (AccB), biotin carboxylase (AccC) and two subunits each of ACCase subunit alpha (AccA) and ACCase subunit beta (AccD). It depends on Zn(2+) as a cofactor.

Its subcellular location is the cytoplasm. It catalyses the reaction N(6)-carboxybiotinyl-L-lysyl-[protein] + acetyl-CoA = N(6)-biotinyl-L-lysyl-[protein] + malonyl-CoA. The protein operates within lipid metabolism; malonyl-CoA biosynthesis; malonyl-CoA from acetyl-CoA: step 1/1. Its function is as follows. Component of the acetyl coenzyme A carboxylase (ACC) complex. Biotin carboxylase (BC) catalyzes the carboxylation of biotin on its carrier protein (BCCP) and then the CO(2) group is transferred by the transcarboxylase to acetyl-CoA to form malonyl-CoA. The protein is Acetyl-coenzyme A carboxylase carboxyl transferase subunit beta of Erwinia tasmaniensis (strain DSM 17950 / CFBP 7177 / CIP 109463 / NCPPB 4357 / Et1/99).